The following is a 554-amino-acid chain: Phospholipase B-like protein E (554 aa).

A signal peptide spans 1 to 19 (MKLFILLIVIVFLISNSYS). N-linked (GlcNAc...) asparagine glycosylation is found at asparagine 113, asparagine 140, asparagine 231, asparagine 302, asparagine 340, and asparagine 546.

It belongs to the phospholipase B-like family.

The protein resides in the secreted. In terms of biological role, probable phospholipase. The chain is Phospholipase B-like protein E (plbE) from Dictyostelium discoideum (Social amoeba).